A 284-amino-acid chain; its full sequence is Acetyl-coenzyme A carboxylase carboxyl transferase subunit beta (284 aa).

The 254-residue stretch at 31–284 (FWTYCKGCDS…LYQILAMHKK (254 aa)) folds into the CoA carboxyltransferase N-terminal domain. Zn(2+)-binding residues include cysteine 35, cysteine 38, cysteine 54, and cysteine 57. The C4-type zinc-finger motif lies at 35–57 (CKGCDSHVFRKDIEENSFVCPKC).

This sequence belongs to the AccD/PCCB family. As to quaternary structure, acetyl-CoA carboxylase is a heterohexamer composed of biotin carboxyl carrier protein (AccB), biotin carboxylase (AccC) and two subunits each of ACCase subunit alpha (AccA) and ACCase subunit beta (AccD). Requires Zn(2+) as cofactor.

Its subcellular location is the cytoplasm. The catalysed reaction is N(6)-carboxybiotinyl-L-lysyl-[protein] + acetyl-CoA = N(6)-biotinyl-L-lysyl-[protein] + malonyl-CoA. The protein operates within lipid metabolism; malonyl-CoA biosynthesis; malonyl-CoA from acetyl-CoA: step 1/1. Its function is as follows. Component of the acetyl coenzyme A carboxylase (ACC) complex. Biotin carboxylase (BC) catalyzes the carboxylation of biotin on its carrier protein (BCCP) and then the CO(2) group is transferred by the transcarboxylase to acetyl-CoA to form malonyl-CoA. This chain is Acetyl-coenzyme A carboxylase carboxyl transferase subunit beta, found in Clostridioides difficile (strain 630) (Peptoclostridium difficile).